A 381-amino-acid polypeptide reads, in one-letter code: Creatine kinase M-type (381 aa).

A Phosphagen kinase N-terminal domain is found at 11 to 98 (KLNFKAEEEY…FDPIIQDRHG (88 aa)). In terms of domain architecture, Phosphagen kinase C-terminal spans 125-367 (YVLSSRVRTG…KLMVEMEKKL (243 aa)). An ATP-binding site is contributed by 128-132 (SSRVR). Position 164 is a phosphoserine (Ser164). The residue at position 166 (Thr166) is a Phosphothreonine. At Ser178 the chain carries Phosphoserine. A Phosphothreonine modification is found at Thr180. His191 contacts ATP. Residue Ser199 is modified to Phosphoserine. Residues Arg236 and Arg292 each coordinate ATP. A phosphothreonine mark is found at Thr313 and Thr322. ATP contacts are provided by residues 320-325 (RGTGGV) and Asp335. Residue Ser372 is modified to Phosphoserine.

Belongs to the ATP:guanido phosphotransferase family. Dimer of identical or non-identical chains, which can be either B (brain type) or M (muscle type). With MM being the major form in skeletal muscle and myocardium, MB existing in myocardium, and BB existing in many tissues, especially brain.

It localises to the cytoplasm. The enzyme catalyses creatine + ATP = N-phosphocreatine + ADP + H(+). Functionally, reversibly catalyzes the transfer of phosphate between ATP and various phosphogens (e.g. creatine phosphate). Creatine kinase isoenzymes play a central role in energy transduction in tissues with large, fluctuating energy demands, such as skeletal muscle, heart, brain and spermatozoa. The protein is Creatine kinase M-type (CKM) of Bos taurus (Bovine).